Consider the following 546-residue polypeptide: Chaperonin GroEL (546 aa).

Residues 30–33 (TLGP), Lys51, 87–91 (DGTTT), Gly415, 479–481 (NAA), and Asp495 contribute to the ATP site.

This sequence belongs to the chaperonin (HSP60) family. As to quaternary structure, forms a cylinder of 14 subunits composed of two heptameric rings stacked back-to-back. Interacts with the co-chaperonin GroES.

Its subcellular location is the cytoplasm. The enzyme catalyses ATP + H2O + a folded polypeptide = ADP + phosphate + an unfolded polypeptide.. Functionally, together with its co-chaperonin GroES, plays an essential role in assisting protein folding. The GroEL-GroES system forms a nano-cage that allows encapsulation of the non-native substrate proteins and provides a physical environment optimized to promote and accelerate protein folding. The chain is Chaperonin GroEL from Pseudomonas entomophila (strain L48).